A 1192-amino-acid polypeptide reads, in one-letter code: Probable inactive serine/threonine-protein kinase DDB_G0280131 (1192 aa).

5 disordered regions span residues 23–90 (STIN…NLNE), 144–189 (DSSI…SQQD), 201–236 (VSIS…TTTA), 301–406 (SIPT…FKDS), and 478–499 (DLDD…NNNK). Positions 26-43 (NLNNNNSNNNNNNNNNGN) are enriched in low complexity. Polar residues predominate over residues 44-60 (SATKISFQEQMPNGNGN). Composition is skewed to low complexity over residues 61–73 (SSTT…QQSA) and 154–175 (SSYL…SNNN). Positions 201–232 (VSISLPPPPTTEELPLPPPSTEELQLPPPPPT) are enriched in pro residues. Low complexity predominate over residues 301 to 324 (SIPTPIVTPSTTTSTNTTTAATVN). Polar residues predominate over residues 325 to 338 (KLNASKSPNGTLTT). Residues 362–376 (PTLSSPSPSQSAAPQ) show a composition bias toward low complexity. Residues 377 to 391 (PAAPQPTPTSQPQPP) show a composition bias toward pro residues. Composition is skewed to low complexity over residues 392 to 402 (TTTVSTPVSPT) and 485 to 498 (NKNN…NNNN). One can recognise a Protein kinase domain in the interval 521 to 783 (AQPSDIIGSG…ILKILRQPLH (263 aa)). Residues 527-535 (IGSGNNGTT) and lysine 549 contribute to the ATP site. Residues 790 to 831 (KPTQQQQQQQQQDQQQQQPEQQLTSSTSSTSTQDSLVSQEQV) form a disordered region. A compositionally biased stretch (low complexity) spans 791–828 (PTQQQQQQQQQDQQQQQPEQQLTSSTSSTSTQDSLVSQ).

It belongs to the protein kinase superfamily. TKL Ser/Thr protein kinase family.

In Dictyostelium discoideum (Social amoeba), this protein is Probable inactive serine/threonine-protein kinase DDB_G0280131.